The chain runs to 171 residues: NADH-quinone oxidoreductase subunit I 1 (171 aa).

2 4Fe-4S ferredoxin-type domains span residues 41–71 (LSRD…LQAT) and 81–110 (EFFR…LTPD). Cys-51, Cys-54, Cys-57, Cys-61, Cys-90, Cys-93, Cys-96, and Cys-100 together coordinate [4Fe-4S] cluster.

The protein belongs to the complex I 23 kDa subunit family. NDH-1 is composed of 14 different subunits. Subunits NuoA, H, J, K, L, M, N constitute the membrane sector of the complex. Requires [4Fe-4S] cluster as cofactor.

It is found in the cell inner membrane. The enzyme catalyses a quinone + NADH + 5 H(+)(in) = a quinol + NAD(+) + 4 H(+)(out). Functionally, NDH-1 shuttles electrons from NADH, via FMN and iron-sulfur (Fe-S) centers, to quinones in the respiratory chain. The immediate electron acceptor for the enzyme in this species is believed to be ubiquinone. Couples the redox reaction to proton translocation (for every two electrons transferred, four hydrogen ions are translocated across the cytoplasmic membrane), and thus conserves the redox energy in a proton gradient. This Nitrosospira multiformis (strain ATCC 25196 / NCIMB 11849 / C 71) protein is NADH-quinone oxidoreductase subunit I 1.